The sequence spans 506 residues: Histidine ammonia-lyase (506 aa).

The 5-imidazolinone (Ala-Gly) cross-link spans 143-145; the sequence is ASG. Ser144 carries the 2,3-didehydroalanine (Ser) modification.

The protein belongs to the PAL/histidase family. Post-translationally, contains an active site 4-methylidene-imidazol-5-one (MIO), which is formed autocatalytically by cyclization and dehydration of residues Ala-Ser-Gly.

Its subcellular location is the cytoplasm. It carries out the reaction L-histidine = trans-urocanate + NH4(+). Its pathway is amino-acid degradation; L-histidine degradation into L-glutamate; N-formimidoyl-L-glutamate from L-histidine: step 1/3. This chain is Histidine ammonia-lyase, found in Salmonella gallinarum (strain 287/91 / NCTC 13346).